Here is a 338-residue protein sequence, read N- to C-terminus: Cell division protein ZipA (338 aa).

Topologically, residues 1–2 (MS) are periplasmic. A helical transmembrane segment spans residues 3–23 (LREWLIAIGTLVIIGIVIDGV). Over 24–338 (RRMRRARKES…FERKQRSQRA (315 aa)) the chain is Cytoplasmic. Residues 33 to 192 (SMAISSGMGA…RKNQPLAGAN (160 aa)) are disordered. Composition is skewed to basic and acidic residues over residues 70-81 (TLEDRGYLKRDM) and 138-162 (EVDR…RAEE).

It belongs to the ZipA family. As to quaternary structure, interacts with FtsZ via their C-terminal domains.

It is found in the cell inner membrane. In terms of biological role, essential cell division protein that stabilizes the FtsZ protofilaments by cross-linking them and that serves as a cytoplasmic membrane anchor for the Z ring. Also required for the recruitment to the septal ring of downstream cell division proteins. The sequence is that of Cell division protein ZipA from Marinobacter nauticus (strain ATCC 700491 / DSM 11845 / VT8) (Marinobacter aquaeolei).